Reading from the N-terminus, the 201-residue chain is 3-isopropylmalate dehydratase small subunit (201 aa).

This sequence belongs to the LeuD family. LeuD type 1 subfamily. Heterodimer of LeuC and LeuD.

It carries out the reaction (2R,3S)-3-isopropylmalate = (2S)-2-isopropylmalate. It functions in the pathway amino-acid biosynthesis; L-leucine biosynthesis; L-leucine from 3-methyl-2-oxobutanoate: step 2/4. Its function is as follows. Catalyzes the isomerization between 2-isopropylmalate and 3-isopropylmalate, via the formation of 2-isopropylmaleate. The protein is 3-isopropylmalate dehydratase small subunit of Pasteurella multocida (strain Pm70).